Consider the following 396-residue polypeptide: Argininosuccinate synthase (396 aa).

Residues 10-18 (AYSGGLDTS) and A37 each bind ATP. Positions 88 and 93 each coordinate L-citrulline. ATP is bound at residue G118. 3 residues coordinate L-aspartate: T120, N124, and D125. N124 provides a ligand contact to L-citrulline. R128, S176, S185, E261, and Y273 together coordinate L-citrulline.

Belongs to the argininosuccinate synthase family. Type 1 subfamily. As to quaternary structure, homotetramer.

It localises to the cytoplasm. It catalyses the reaction L-citrulline + L-aspartate + ATP = 2-(N(omega)-L-arginino)succinate + AMP + diphosphate + H(+). It participates in amino-acid biosynthesis; L-arginine biosynthesis; L-arginine from L-ornithine and carbamoyl phosphate: step 2/3. The chain is Argininosuccinate synthase from Nitratidesulfovibrio vulgaris (strain DP4) (Desulfovibrio vulgaris).